The primary structure comprises 71 residues: MADSSERAAFREVLPKQGLLFTEQTPIPVLCKPKIMPMKSVTLEKLETMQREAQEAVKRQEEEQKLQGGMI.

It belongs to the BBIP10 family.

It is found in the cell projection. The protein resides in the cilium. The protein localises to the cytoplasm. Required for primary cilia assembly. This Nematostella vectensis (Starlet sea anemone) protein is BBSome-interacting protein 1 (bbip1).